The primary structure comprises 239 residues: Ribitol-5-phosphate cytidylyltransferase (239 aa).

Residues 7–10 (FAGG) and 80–86 (GETGQMS) each bind CTP.

Belongs to the IspD/TarI cytidylyltransferase family. TarI subfamily.

The catalysed reaction is D-ribitol 5-phosphate + CTP + H(+) = CDP-L-ribitol + diphosphate. It functions in the pathway cell wall biogenesis; poly(ribitol phosphate) teichoic acid biosynthesis. In terms of biological role, catalyzes the transfer of the cytidylyl group of CTP to D-ribitol 5-phosphate. The protein is Ribitol-5-phosphate cytidylyltransferase of Streptococcus agalactiae serotype Ia (strain ATCC 27591 / A909 / CDC SS700).